The primary structure comprises 238 residues: uncharacterized protein (238 aa).

This sequence belongs to the mimivirus L74/L77/R857 family.

This is an uncharacterized protein from Acanthamoeba polyphaga mimivirus (APMV).